Here is a 363-residue protein sequence, read N- to C-terminus: Phosphoserine aminotransferase (363 aa).

Arg42 lines the L-glutamate pocket. Pyridoxal 5'-phosphate is bound by residues 76–77, Trp104, Thr155, Asp175, and Gln198; that span reads AR. Lys199 bears the N6-(pyridoxal phosphate)lysine mark. 240-241 lines the pyridoxal 5'-phosphate pocket; that stretch reads NT.

This sequence belongs to the class-V pyridoxal-phosphate-dependent aminotransferase family. SerC subfamily. As to quaternary structure, homodimer. Pyridoxal 5'-phosphate is required as a cofactor.

It is found in the cytoplasm. The enzyme catalyses O-phospho-L-serine + 2-oxoglutarate = 3-phosphooxypyruvate + L-glutamate. It catalyses the reaction 4-(phosphooxy)-L-threonine + 2-oxoglutarate = (R)-3-hydroxy-2-oxo-4-phosphooxybutanoate + L-glutamate. The protein operates within amino-acid biosynthesis; L-serine biosynthesis; L-serine from 3-phospho-D-glycerate: step 2/3. It functions in the pathway cofactor biosynthesis; pyridoxine 5'-phosphate biosynthesis; pyridoxine 5'-phosphate from D-erythrose 4-phosphate: step 3/5. Its function is as follows. Catalyzes the reversible conversion of 3-phosphohydroxypyruvate to phosphoserine and of 3-hydroxy-2-oxo-4-phosphonooxybutanoate to phosphohydroxythreonine. The polypeptide is Phosphoserine aminotransferase (serC) (Edwardsiella ictaluri (strain 93-146)).